The chain runs to 139 residues: MGRTIRFGVSLDSDLLEKFDALCDDRCYQTRSEAIRDLIRNTLVQQEWEDTDREIAGTLTIVYDHHKSDLAQRLTEIQHDHHGIIITSLHVHLDHHNCLEVLVLKGPGADVRTLSQRLISTKGVKHGKLSLTTTGQDLT.

Residues histidine 79, histidine 90, histidine 92, and cysteine 98 each contribute to the Ni(2+) site.

Belongs to the transcriptional regulatory CopG/NikR family. Ni(2+) is required as a cofactor.

Its function is as follows. Transcriptional regulator. The polypeptide is Putative nickel-responsive regulator (Nitratidesulfovibrio vulgaris (strain DSM 19637 / Miyazaki F) (Desulfovibrio vulgaris)).